The sequence spans 349 residues: Phosphoribosylformylglycinamidine cyclo-ligase (349 aa).

This sequence belongs to the AIR synthase family.

The protein resides in the cytoplasm. The enzyme catalyses 2-formamido-N(1)-(5-O-phospho-beta-D-ribosyl)acetamidine + ATP = 5-amino-1-(5-phospho-beta-D-ribosyl)imidazole + ADP + phosphate + H(+). The protein operates within purine metabolism; IMP biosynthesis via de novo pathway; 5-amino-1-(5-phospho-D-ribosyl)imidazole from N(2)-formyl-N(1)-(5-phospho-D-ribosyl)glycinamide: step 2/2. In Listeria monocytogenes serovar 1/2a (strain ATCC BAA-679 / EGD-e), this protein is Phosphoribosylformylglycinamidine cyclo-ligase.